A 249-amino-acid chain; its full sequence is Glucosamine-6-phosphate deaminase (249 aa).

The active-site Proton acceptor; for enolization step is Asp67. Asn136 serves as the catalytic For ring-opening step. Residue His138 is the Proton acceptor; for ring-opening step of the active site. The active-site For ring-opening step is the Glu143.

This sequence belongs to the glucosamine/galactosamine-6-phosphate isomerase family. NagB subfamily.

The enzyme catalyses alpha-D-glucosamine 6-phosphate + H2O = beta-D-fructose 6-phosphate + NH4(+). Its pathway is amino-sugar metabolism; N-acetylneuraminate degradation; D-fructose 6-phosphate from N-acetylneuraminate: step 5/5. In terms of biological role, catalyzes the reversible isomerization-deamination of glucosamine 6-phosphate (GlcN6P) to form fructose 6-phosphate (Fru6P) and ammonium ion. The chain is Glucosamine-6-phosphate deaminase from Clostridioides difficile (strain 630) (Peptoclostridium difficile).